Here is a 250-residue protein sequence, read N- to C-terminus: Triosephosphate isomerase (250 aa).

8–10 (NWK) contributes to the substrate binding site. The active-site Electrophile is the histidine 96. Glutamate 169 functions as the Proton acceptor in the catalytic mechanism. Substrate is bound by residues glycine 175, serine 214, and 235–236 (GG).

The protein belongs to the triosephosphate isomerase family. Homodimer.

It is found in the cytoplasm. It catalyses the reaction D-glyceraldehyde 3-phosphate = dihydroxyacetone phosphate. The protein operates within carbohydrate biosynthesis; gluconeogenesis. It participates in carbohydrate degradation; glycolysis; D-glyceraldehyde 3-phosphate from glycerone phosphate: step 1/1. Involved in the gluconeogenesis. Catalyzes stereospecifically the conversion of dihydroxyacetone phosphate (DHAP) to D-glyceraldehyde-3-phosphate (G3P). The polypeptide is Triosephosphate isomerase (Oleidesulfovibrio alaskensis (strain ATCC BAA-1058 / DSM 17464 / G20) (Desulfovibrio alaskensis)).